Here is a 278-residue protein sequence, read N- to C-terminus: Pantothenate synthetase (278 aa).

Residue 27 to 34 (MGYLHEGH) coordinates ATP. His-34 functions as the Proton donor in the catalytic mechanism. Gln-58 contributes to the (R)-pantoate binding site. Gln-58 contacts beta-alanine. 144–147 (GQKD) contacts ATP. Position 150 (Gln-150) interacts with (R)-pantoate. Residues Val-173 and 181–184 (MSSR) each bind ATP.

The protein belongs to the pantothenate synthetase family. As to quaternary structure, homodimer.

The protein resides in the cytoplasm. The catalysed reaction is (R)-pantoate + beta-alanine + ATP = (R)-pantothenate + AMP + diphosphate + H(+). It participates in cofactor biosynthesis; (R)-pantothenate biosynthesis; (R)-pantothenate from (R)-pantoate and beta-alanine: step 1/1. In terms of biological role, catalyzes the condensation of pantoate with beta-alanine in an ATP-dependent reaction via a pantoyl-adenylate intermediate. This Roseiflexus sp. (strain RS-1) protein is Pantothenate synthetase.